A 385-amino-acid polypeptide reads, in one-letter code: Succinate--CoA ligase [ADP-forming] subunit beta (385 aa).

The 236-residue stretch at 9–244 folds into the ATP-grasp domain; sequence KEILRKYGVP…QDEEDPLETR (236 aa). ATP contacts are provided by residues lysine 46, 53–55, glutamate 99, cysteine 102, and glutamate 107; that span reads GRG. Mg(2+) contacts are provided by asparagine 199 and aspartate 213. Residues asparagine 264 and 321 to 323 each bind substrate; that span reads GIM.

This sequence belongs to the succinate/malate CoA ligase beta subunit family. As to quaternary structure, heterotetramer of two alpha and two beta subunits. Requires Mg(2+) as cofactor.

The catalysed reaction is succinate + ATP + CoA = succinyl-CoA + ADP + phosphate. It catalyses the reaction GTP + succinate + CoA = succinyl-CoA + GDP + phosphate. It participates in carbohydrate metabolism; tricarboxylic acid cycle; succinate from succinyl-CoA (ligase route): step 1/1. Its function is as follows. Succinyl-CoA synthetase functions in the citric acid cycle (TCA), coupling the hydrolysis of succinyl-CoA to the synthesis of either ATP or GTP and thus represents the only step of substrate-level phosphorylation in the TCA. The beta subunit provides nucleotide specificity of the enzyme and binds the substrate succinate, while the binding sites for coenzyme A and phosphate are found in the alpha subunit. The chain is Succinate--CoA ligase [ADP-forming] subunit beta from Rickettsia bellii (strain OSU 85-389).